A 363-amino-acid polypeptide reads, in one-letter code: D-alanine--D-alanine ligase (363 aa).

The ATP-grasp domain occupies 148-353 (KKLLAAEGLP…YGTLVSTLIE (206 aa)). Residue 176-231 (RERLGLPVFVKPARAGSSIGITKVDDWAALDTAIAAAREHDPKVIVEAGIVGREVE) participates in ATP binding. The Mg(2+) site is built by Asp-308, Glu-320, and Asn-322.

The protein belongs to the D-alanine--D-alanine ligase family. The cofactor is Mg(2+). Mn(2+) is required as a cofactor.

Its subcellular location is the cytoplasm. It carries out the reaction 2 D-alanine + ATP = D-alanyl-D-alanine + ADP + phosphate + H(+). The protein operates within cell wall biogenesis; peptidoglycan biosynthesis. Functionally, cell wall formation. This chain is D-alanine--D-alanine ligase, found in Nocardia farcinica (strain IFM 10152).